The sequence spans 87 residues: Apolipoprotein C-I (87 aa).

An N-terminal signal peptide occupies residues 1–26 (MRFILSLPVLAVVLAMVLEGPAPAQA).

This sequence belongs to the apolipoprotein C1 family.

The protein resides in the secreted. In terms of biological role, inhibitor of lipoprotein binding to the low density lipoprotein (LDL) receptor, LDL receptor-related protein, and very low density lipoprotein (VLDL) receptor. Associates with high density lipoproteins (HDL) and the triacylglycerol-rich lipoproteins in the plasma and makes up about 10% of the protein of the VLDL and 2% of that of HDL. Appears to interfere directly with fatty acid uptake and is also the major plasma inhibitor of cholesteryl ester transfer protein (CETP). Binds free fatty acids and reduces their intracellular esterification. Modulates the interaction of APOE with beta-migrating VLDL and inhibits binding of beta-VLDL to the LDL receptor-related protein. In Pteropus alecto (Black flying fox), this protein is Apolipoprotein C-I (APOC1).